Here is a 348-residue protein sequence, read N- to C-terminus: Rhodopsin (348 aa).

Met1 carries the post-translational modification N-acetylmethionine. Residues 1-36 lie on the Extracellular side of the membrane; sequence MNGTEGPNFYVPFSNKTGVVRSPFEAPQYYLAEPWQ. N-linked (GlcNAc...) asparagine glycans are attached at residues Asn2 and Asn15. Residues 37 to 61 traverse the membrane as a helical segment; sequence FSMLAAYMFLLIVLGFPINFLTLYV. The Cytoplasmic portion of the chain corresponds to 62–73; sequence TVQHKKLRTPLN. The chain crosses the membrane as a helical span at residues 74-96; it reads YILLNLAVADLFMVFGGFTTTLY. At 97–110 the chain is on the extracellular side; the sequence is TSLHGYFVFGPTGC. Cys110 and Cys187 form a disulfide bridge. Residues 111–133 form a helical membrane-spanning segment; sequence NLEGFFATLGGEIALWSLVVLAI. Positions 134–136 match the 'Ionic lock' involved in activated form stabilization motif; sequence ERY. Topologically, residues 134–152 are cytoplasmic; that stretch reads ERYVVVCKPMSNFRFGENH. The helical transmembrane segment at 153–173 threads the bilayer; it reads AIMGVAFTWVMALACAAPPLV. At 174–202 the chain is on the extracellular side; the sequence is GWSRYIPQGMQCSCGALYFTLKPEINNES. Glu201 is a Zn(2+) binding site. Residues 203–224 form a helical membrane-spanning segment; the sequence is FVIYMFVVHFSIPLIVIFFCYG. Residues 225–252 lie on the Cytoplasmic side of the membrane; the sequence is QLVFTVKEAAAQQQESATTQKAEKEVTR. A helical membrane pass occupies residues 253–274; sequence MVIIMVIAFLICWLPYAGVAFY. The Extracellular portion of the chain corresponds to 275-286; sequence IFTHQGSDFGPI. Gln279 is a Zn(2+) binding site. A helical transmembrane segment spans residues 287-308; the sequence is FMTIPAFFAKSSSVYNPVIYIM. Lys296 carries the post-translational modification N6-(retinylidene)lysine. Over 309 to 348 the chain is Cytoplasmic; sequence MNKQFRNCMLTTLCCGKNPLGDDEASTTVSKTETSQVAPA. S-palmitoyl cysteine attachment occurs at residues Cys322 and Cys323. An interaction with SAG region spans residues 330–348; that stretch reads DDEASTTVSKTETSQVAPA. Phosphoserine is present on Ser334. At Ser334 the chain carries Phosphoserine; by RK and GRK7. Thr335 and Thr336 each carry phosphothreonine. Residues Thr335 and Thr336 each carry the phosphothreonine; by RK and GRK7 modification. Ser338 is subject to Phosphoserine; by RK and GRK7. Thr340 and Thr342 each carry phosphothreonine. Ser343 carries the phosphoserine; by RK and GRK7 modification.

It belongs to the G-protein coupled receptor 1 family. Opsin subfamily. In terms of assembly, homodimer. May form a complex composed of RHO, GRK1 and RCVRN in a Ca(2+)-dependent manner; RCVRN prevents the interaction between GRK1 and RHO. Interacts with GRK1. Interacts (phosphorylated form) with SAG. Interacts with GNAT1. Interacts with GNAT3. SAG and G-proteins compete for a common binding site. Interacts with PRCD; the interaction promotes PRCD stability. Forms a complex with ASAP1 and ARF4. Forms a complex with ASAP1, RAB11A, Rabin8/RAB3IP, ARF4 and RAB11FIP3; the complex regulates Golgi-to-cilia rhodopsin/RHO transport in photoreceptors. Phosphorylated on some or all of the serine and threonine residues present in the C-terminal region. Post-translationally, contains one covalently linked retinal chromophore. Upon light absorption, the covalently bound 11-cis-retinal is converted to all-trans-retinal. After hydrolysis of the Schiff base and release of the covalently bound all-trans-retinal, active rhodopsin is regenerated by binding of a fresh molecule of 11-cis-retinal.

Its subcellular location is the membrane. The protein localises to the cell projection. The protein resides in the cilium. It is found in the photoreceptor outer segment. Functionally, photoreceptor required for image-forming vision at low light intensity. Required for photoreceptor cell viability after birth. Light-induced isomerization of 11-cis to all-trans retinal triggers a conformational change that activates signaling via G-proteins. Subsequent receptor phosphorylation mediates displacement of the bound G-protein alpha subunit by the arrestin SAG and terminates signaling. This Ovis aries (Sheep) protein is Rhodopsin (RHO).